We begin with the raw amino-acid sequence, 280 residues long: Four and a half LIM domains protein 1 (280 aa).

At S2 the chain carries N-acetylserine. Position 4 is an N6-acetyllysine (K4). The C4-type zinc-finger motif lies at C7–C31. LIM zinc-binding domains lie at C40–C92, C101–C153, C162–C212, and C221–C276. A Glycyl lysine isopeptide (Lys-Gly) (interchain with G-Cter in SUMO2) cross-link involves residue K86.

In terms of tissue distribution, isoform 1 seems to be most abundant in each tissue and isoform 2 much less abundant. Isoform 1 is highly expressed in skeletal muscle and lung, and to a lesser extent in heart, brain and kidney. Isoform 2 was found in brain, lung kidney and genital organs.

The protein resides in the cytoplasm. The protein localises to the nucleus. In terms of biological role, may have an involvement in muscle development or hypertrophy. Isoform 2 binds to RBP-J and plays a negative regulatory role in the RBP-J-mediated transcription in mammalian systems. The protein is Four and a half LIM domains protein 1 (Fhl1) of Mus musculus (Mouse).